A 118-amino-acid chain; its full sequence is Heavy metal-associated isoprenylated plant protein 12 (118 aa).

An HMA domain is found at 1–65; that stretch reads MQVVVLKLDV…KICHTEFISV (65 aa). The interval 68–87 is disordered; that stretch reads VKEPEKKKPDDPKKPETKPP. The segment covering 69–86 has biased composition (basic and acidic residues); it reads KEPEKKKPDDPKKPETKP. A Cysteine methyl ester modification is found at Cys115. Cys115 carries S-farnesyl cysteine lipidation. Positions 116 to 118 are cleaved as a propeptide — removed in mature form; the sequence is VTS.

The protein belongs to the HIPP family.

In terms of biological role, probable heavy-metal-binding protein. The sequence is that of Heavy metal-associated isoprenylated plant protein 12 from Arabidopsis thaliana (Mouse-ear cress).